The following is a 21-amino-acid chain: Major outer membrane protein (21 aa).

Disulfide bond interactions within and between MOMP molecules and other components form high molecular-weight oligomers.

The protein localises to the cell outer membrane. Its function is as follows. Structural rigidity of the outer membrane of elementary bodies and porin forming, permitting diffusion of solutes through the intracellular reticulate body membrane. This is Major outer membrane protein from Actinobacillus equuli.